The sequence spans 369 residues: Phosphatidylglycerol--prolipoprotein diacylglyceryl transferase (369 aa).

Transmembrane regions (helical) follow at residues 26–46 (YYGILYATGILVAIIAGILTL), 60–80 (YVFIGIISIIFGARTWSFIIG), and 97–117 (LAIQGGVIFTITTGLIFFFFI). Arg-167 contacts a 1,2-diacyl-sn-glycero-3-phospho-(1'-sn-glycerol). A run of 2 helical transmembrane segments spans residues 216-236 (VPIFLIESFFNVIAFIIIVFL) and 273-293 (FVTSIVTSVLFLLGGSIGFIF).

This sequence belongs to the Lgt family.

Its subcellular location is the cell membrane. It catalyses the reaction L-cysteinyl-[prolipoprotein] + a 1,2-diacyl-sn-glycero-3-phospho-(1'-sn-glycerol) = an S-1,2-diacyl-sn-glyceryl-L-cysteinyl-[prolipoprotein] + sn-glycerol 1-phosphate + H(+). It participates in protein modification; lipoprotein biosynthesis (diacylglyceryl transfer). Catalyzes the transfer of the diacylglyceryl group from phosphatidylglycerol to the sulfhydryl group of the N-terminal cysteine of a prolipoprotein, the first step in the formation of mature lipoproteins. This is Phosphatidylglycerol--prolipoprotein diacylglyceryl transferase from Mycoplasmoides gallisepticum (strain R(low / passage 15 / clone 2)) (Mycoplasma gallisepticum).